Reading from the N-terminus, the 397-residue chain is 2-deoxy-scyllo-inosose synthase (397 aa).

Residues Asp41, 71–74 (EPYK), 103–107 (GVIGN), 127–128 (TS), 138–140 (SLK), and 149–150 (KN) each bind NAD(+). The active site involves Lys140. Residue Glu182 participates in Co(2+) binding. Glu242 is a catalytic residue. Co(2+)-binding residues include His245 and His261.

The protein belongs to the sugar phosphate cyclases superfamily. DOI synthase family. It depends on NAD(+) as a cofactor. Co(2+) is required as a cofactor.

The enzyme catalyses D-glucose 6-phosphate = 2-deoxy-L-scyllo-inosose + phosphate. It functions in the pathway metabolic intermediate biosynthesis; 2-deoxystreptamine biosynthesis; 2-deoxystreptamine from D-glucose 6-phosphate: step 1/4. Its pathway is antibiotic biosynthesis; gentamicin biosynthesis. Functionally, catalyzes the intramolecular carbocycle formation from D-glucose-6-phosphate to 2-deoxy-scyllo-inosose (DOI). The protein is 2-deoxy-scyllo-inosose synthase (gtmA) of Micromonospora echinospora (Micromonospora purpurea).